A 75-amino-acid polypeptide reads, in one-letter code: U9-theraphotoxin-Cg1a (75 aa).

Residues 1-21 (MKTLVLFIIFGLAALFLLSSA) form the signal peptide. A propeptide spanning residues 22–29 (NELEETER) is cleaved from the precursor. 3 cysteine pairs are disulfide-bonded: C31–C46, C38–C51, and C45–C58.

It belongs to the neurotoxin 10 (Hwtx-1) family. 43 (Jztx-49) subfamily. Expressed by the venom gland.

The protein localises to the secreted. In terms of biological role, probable ion channel inhibitor. In Chilobrachys guangxiensis (Chinese earth tiger tarantula), this protein is U9-theraphotoxin-Cg1a.